The primary structure comprises 94 residues: Putative pterin-4-alpha-carbinolamine dehydratase (94 aa).

This sequence belongs to the pterin-4-alpha-carbinolamine dehydratase family.

It catalyses the reaction (4aS,6R)-4a-hydroxy-L-erythro-5,6,7,8-tetrahydrobiopterin = (6R)-L-erythro-6,7-dihydrobiopterin + H2O. This Chloroflexus aggregans (strain MD-66 / DSM 9485) protein is Putative pterin-4-alpha-carbinolamine dehydratase.